Consider the following 308-residue polypeptide: Aspartate carbamoyltransferase catalytic subunit (308 aa).

2 residues coordinate carbamoyl phosphate: arginine 57 and threonine 58. Lysine 86 contributes to the L-aspartate binding site. Residues arginine 107, histidine 135, and glutamine 138 each coordinate carbamoyl phosphate. Residues arginine 168 and arginine 229 each contribute to the L-aspartate site. Carbamoyl phosphate-binding residues include leucine 268 and proline 269.

This sequence belongs to the aspartate/ornithine carbamoyltransferase superfamily. ATCase family. In terms of assembly, heterooligomer of catalytic and regulatory chains.

The catalysed reaction is carbamoyl phosphate + L-aspartate = N-carbamoyl-L-aspartate + phosphate + H(+). Its pathway is pyrimidine metabolism; UMP biosynthesis via de novo pathway; (S)-dihydroorotate from bicarbonate: step 2/3. In terms of biological role, catalyzes the condensation of carbamoyl phosphate and aspartate to form carbamoyl aspartate and inorganic phosphate, the committed step in the de novo pyrimidine nucleotide biosynthesis pathway. This is Aspartate carbamoyltransferase catalytic subunit from Pyrococcus furiosus (strain ATCC 43587 / DSM 3638 / JCM 8422 / Vc1).